Here is a 314-residue protein sequence, read N- to C-terminus: 4-hydroxy-3-methylbut-2-enyl diphosphate reductase (314 aa).

A [4Fe-4S] cluster-binding site is contributed by Cys12. His41 and His74 together coordinate (2E)-4-hydroxy-3-methylbut-2-enyl diphosphate. His41 and His74 together coordinate dimethylallyl diphosphate. Positions 41 and 74 each coordinate isopentenyl diphosphate. A [4Fe-4S] cluster-binding site is contributed by Cys96. His124 is a (2E)-4-hydroxy-3-methylbut-2-enyl diphosphate binding site. His124 serves as a coordination point for dimethylallyl diphosphate. His124 contributes to the isopentenyl diphosphate binding site. Glu126 (proton donor) is an active-site residue. Thr167 lines the (2E)-4-hydroxy-3-methylbut-2-enyl diphosphate pocket. Cys197 serves as a coordination point for [4Fe-4S] cluster. (2E)-4-hydroxy-3-methylbut-2-enyl diphosphate-binding residues include Ser225, Ser226, Asn227, and Ser269. 4 residues coordinate dimethylallyl diphosphate: Ser225, Ser226, Asn227, and Ser269. Ser225, Ser226, Asn227, and Ser269 together coordinate isopentenyl diphosphate.

Belongs to the IspH family. The cofactor is [4Fe-4S] cluster.

The enzyme catalyses isopentenyl diphosphate + 2 oxidized [2Fe-2S]-[ferredoxin] + H2O = (2E)-4-hydroxy-3-methylbut-2-enyl diphosphate + 2 reduced [2Fe-2S]-[ferredoxin] + 2 H(+). The catalysed reaction is dimethylallyl diphosphate + 2 oxidized [2Fe-2S]-[ferredoxin] + H2O = (2E)-4-hydroxy-3-methylbut-2-enyl diphosphate + 2 reduced [2Fe-2S]-[ferredoxin] + 2 H(+). The protein operates within isoprenoid biosynthesis; dimethylallyl diphosphate biosynthesis; dimethylallyl diphosphate from (2E)-4-hydroxy-3-methylbutenyl diphosphate: step 1/1. It participates in isoprenoid biosynthesis; isopentenyl diphosphate biosynthesis via DXP pathway; isopentenyl diphosphate from 1-deoxy-D-xylulose 5-phosphate: step 6/6. Catalyzes the conversion of 1-hydroxy-2-methyl-2-(E)-butenyl 4-diphosphate (HMBPP) into a mixture of isopentenyl diphosphate (IPP) and dimethylallyl diphosphate (DMAPP). Acts in the terminal step of the DOXP/MEP pathway for isoprenoid precursor biosynthesis. This is 4-hydroxy-3-methylbut-2-enyl diphosphate reductase from Haemophilus ducreyi (strain 35000HP / ATCC 700724).